The sequence spans 359 residues: Ribosomal RNA small subunit methyltransferase H (359 aa).

S-adenosyl-L-methionine is bound by residues 39–41 (AGH), Asp58, Phe87, Asp108, and Gln115. The segment at 339–359 (IQGSASPGRAKNTARIRTRRG) is disordered. Over residues 350 to 359 (NTARIRTRRG) the composition is skewed to basic residues.

It belongs to the methyltransferase superfamily. RsmH family.

Its subcellular location is the cytoplasm. The enzyme catalyses cytidine(1402) in 16S rRNA + S-adenosyl-L-methionine = N(4)-methylcytidine(1402) in 16S rRNA + S-adenosyl-L-homocysteine + H(+). In terms of biological role, specifically methylates the N4 position of cytidine in position 1402 (C1402) of 16S rRNA. This is Ribosomal RNA small subunit methyltransferase H from Bifidobacterium longum subsp. infantis (strain ATCC 15697 / DSM 20088 / JCM 1222 / NCTC 11817 / S12).